The primary structure comprises 602 residues: Major capsid protein (602 aa).

Disordered regions lie at residues 149–191 (GSEM…ALEK) and 234–261 (APQPIDTNPGDNQRDLPQFNHQRPGQNV). A compositionally biased stretch (polar residues) spans 157–167 (NTTTTAQQPGK). The span at 170–191 (NGEHQEPTTRTFAEPKDGALEK) shows a compositional bias: basic and acidic residues.

This sequence belongs to the HK97 phage major capsid protein family.

The protein resides in the virion. Its function is as follows. Assembles to form an icosahedral capsid. This Vreelandella aquamarina (Bacteriophage phiHAP-1) protein is Major capsid protein.